A 196-amino-acid chain; its full sequence is Protein LIGHT-DEPENDENT SHORT HYPOCOTYLS 6 (196 aa).

The span at 1-16 (MESADSGRSDPVKGDD) shows a compositional bias: basic and acidic residues. Disordered regions lie at residues 1–36 (MESA…ESQK) and 149–196 (ARGI…AVPP). The ALOG domain maps to 31-158 (RYESQKRRDW…ARGIPYEKKK (128 aa)). The Nuclear localization signal motif lies at 156-160 (KKKRK).

The protein belongs to the plant homeotic and developmental regulators ALOG protein family.

It is found in the nucleus. Its function is as follows. Probable transcription regulator that acts as a developmental regulator by promoting cell growth in response to light. In Arabidopsis thaliana (Mouse-ear cress), this protein is Protein LIGHT-DEPENDENT SHORT HYPOCOTYLS 6 (LSH6).